The sequence spans 254 residues: CDP-diacylglycerol pyrophosphatase (254 aa).

Residues 6-26 form a helical membrane-spanning segment; the sequence is YFLLALLVAILAALAGGYYWL.

This sequence belongs to the Cdh family.

The protein localises to the cell inner membrane. It carries out the reaction a CDP-1,2-diacyl-sn-glycerol + H2O = a 1,2-diacyl-sn-glycero-3-phosphate + CMP + 2 H(+). It participates in phospholipid metabolism; CDP-diacylglycerol degradation; phosphatidate from CDP-diacylglycerol: step 1/1. This Klebsiella pneumoniae (strain 342) protein is CDP-diacylglycerol pyrophosphatase.